Consider the following 167-residue polypeptide: Calcium-binding protein CML19 (167 aa).

EF-hand domains lie at 23-58 (QKRREIREIFDLFDIDGSGSIDASELNVAMRSLGFE), 59-94 (MNNQQINELMAEVDKNQSGAIDFDEFVHMMTTKFGE), 96-131 (DSIDELSKAFKIIDHDNNGKISPRDIKMIAKELGEN), and 132-167 (FTDNDIEEMIEEADRDKDGEVNLEEFMKMMKRTSYG). Residues aspartate 36, aspartate 38, serine 40, serine 42, glutamate 47, aspartate 72, asparagine 74, serine 76, glutamate 83, aspartate 109, aspartate 111, asparagine 113, lysine 115, aspartate 120, aspartate 145, aspartate 147, aspartate 149, glutamate 151, and glutamate 156 each coordinate Ca(2+).

This sequence belongs to the centrin family. In terms of assembly, interacts with RAD4. Calcium is required for this interaction. Interacts with SAC3B. In terms of tissue distribution, expressed in leaves, roots, and at lower level in stems. Barely detectable in flower buds and flowers.

It is found in the cytoplasm. Its subcellular location is the nucleus. Functionally, potential calcium sensor that binds calcium in vitro. Modulates homologous recombination and nucleotide excision repair (NER). Involved in the early response to UV irradiation. The polypeptide is Calcium-binding protein CML19 (Arabidopsis thaliana (Mouse-ear cress)).